We begin with the raw amino-acid sequence, 828 residues long: Deubiquitinase MYSM1 (828 aa).

Residues 1–12 (MAAEEADVDIEG) show a composition bias toward acidic residues. Residues 1–31 (MAAEEADVDIEGDVVAAAGAQPGSGENTASV) are disordered. Ser110 is subject to Phosphoserine. The 52-residue stretch at 116–167 (SYSVKWTIEEKELFEQGLAKFGRRWTKISKLIGSRTVLQVKSYARQYFKNKV) folds into the SANT domain. Residue Lys187 forms a Glycyl lysine isopeptide (Lys-Gly) (interchain with G-Cter in SUMO2) linkage. Position 218 is a phosphoserine (Ser218). Residue Thr236 is modified to Phosphothreonine. Phosphoserine is present on residues Ser242, Ser267, and Ser340. Positions 372–470 (LKPPEQEIEI…FGCEQAVYNR (99 aa)) constitute an SWIRM domain. An MPN domain is found at 577-709 (VKVASEALLI…PLPYSQITCL (133 aa)). Residues His656, His658, and Asp669 each contribute to the Zn(2+) site. The JAMM motif motif lies at 656 to 669 (HSHPAFDPNPSLRD). Positions 774–778 (LQKLL) match the LXXLL motif motif.

Belongs to the peptidase M67A family. MYSM1 subfamily. In terms of assembly, component of a large chromatin remodeling complex, at least composed of MYSM1, PCAF, RBM10 and KIF11/TRIP5. Binds histones. Interacts with NFIL3; this interaction is critical for their correct recruitment to the ID2 locus during natural killer cell maturation.

It localises to the nucleus. It is found in the cytoplasm. Functionally, metalloprotease with deubiquitinase activity that plays important regulator roles in hematopoietic stem cell function, blood cell production and immune response. Participates in the normal programming of B-cell responses to antigen after the maturation process. Within the cytoplasm, plays critical roles in the repression of innate immunity and autoimmunity. Removes 'Lys-63'-linked polyubiquitins from TRAF3 and TRAF6 complexes. Attenuates NOD2-mediated inflammation and tissue injury by promoting 'Lys-63'-linked deubiquitination of RIPK2 component. Suppresses the CGAS-STING1 signaling pathway by cleaving STING1 'Lys-63'-linked ubiquitin chains. In the nucleus, acts as a hematopoietic transcription regulator derepressing a range of genes essential for normal stem cell differentiation including EBF1 and PAX5 in B-cells, ID2 in NK-cell progenitor or FLT3 in dendritic cell precursors. Deubiquitinates monoubiquitinated histone H2A, a specific tag for epigenetic transcriptional repression, leading to dissociation of histone H1 from the nucleosome. The polypeptide is Deubiquitinase MYSM1 (MYSM1) (Homo sapiens (Human)).